Reading from the N-terminus, the 395-residue chain is Alanine racemase 2 (395 aa).

Lys60 serves as the catalytic Proton acceptor; specific for D-alanine. At Lys60 the chain carries N6-(pyridoxal phosphate)lysine. Position 158 (Arg158) interacts with substrate. The active-site Proton acceptor; specific for L-alanine is the Tyr288. Met332 is a binding site for substrate.

This sequence belongs to the alanine racemase family. It depends on pyridoxal 5'-phosphate as a cofactor.

The catalysed reaction is L-alanine = D-alanine. Its pathway is amino-acid biosynthesis; D-alanine biosynthesis; D-alanine from L-alanine: step 1/1. Its function is as follows. Catalyzes the interconversion of L-alanine and D-alanine. May also act on other amino acids. This is Alanine racemase 2 (alr2) from Clostridium acetobutylicum (strain ATCC 824 / DSM 792 / JCM 1419 / IAM 19013 / LMG 5710 / NBRC 13948 / NRRL B-527 / VKM B-1787 / 2291 / W).